Reading from the N-terminus, the 166-residue chain is NAD(P)H-quinone oxidoreductase subunit I, chloroplastic (166 aa).

2 4Fe-4S ferredoxin-type domains span residues 55–84 (GRIH…VDWK) and 95–124 (LNYS…MTEE). Positions 64, 67, 70, 74, 104, 107, 110, and 114 each coordinate [4Fe-4S] cluster.

The protein belongs to the complex I 23 kDa subunit family. As to quaternary structure, NDH is composed of at least 16 different subunits, 5 of which are encoded in the nucleus. [4Fe-4S] cluster is required as a cofactor.

It is found in the plastid. The protein localises to the chloroplast thylakoid membrane. The enzyme catalyses a plastoquinone + NADH + (n+1) H(+)(in) = a plastoquinol + NAD(+) + n H(+)(out). It carries out the reaction a plastoquinone + NADPH + (n+1) H(+)(in) = a plastoquinol + NADP(+) + n H(+)(out). NDH shuttles electrons from NAD(P)H:plastoquinone, via FMN and iron-sulfur (Fe-S) centers, to quinones in the photosynthetic chain and possibly in a chloroplast respiratory chain. The immediate electron acceptor for the enzyme in this species is believed to be plastoquinone. Couples the redox reaction to proton translocation, and thus conserves the redox energy in a proton gradient. This is NAD(P)H-quinone oxidoreductase subunit I, chloroplastic from Acanthospermum australe (Paraguayan starburr).